Here is a 406-residue protein sequence, read N- to C-terminus: Transposase for insertion sequence element IS1001 (406 aa).

Belongs to the transposase 12 family.

In terms of biological role, involved in the transposition of the insertion sequence. This is Transposase for insertion sequence element IS1001 (tnpA) from Bordetella parapertussis.